The chain runs to 266 residues: CAAX prenyl protease 2 (266 aa).

The next 3 membrane-spanning stretches (helical) occupy residues 1-21, 42-59, and 78-98; these read MGAG…VHLF, LLSN…LRDY, and ITYP…MMQI. Catalysis depends on proton donor/acceptor residues glutamate 131 and histidine 164. Helical transmembrane passes span 186–206, 210–230, and 239–259; these read GFQF…QLTT, IVPI…WLEI, and RLTL…LLYT.

This sequence belongs to the peptidase U48 family.

The protein localises to the endoplasmic reticulum membrane. The protein resides in the membrane. The enzyme catalyses Hydrolyzes the peptide bond -P2-(S-farnesyl or geranylgeranyl)C-P1'-P2'-P3'-COOH where P1' and P2' are amino acids with aliphatic sidechains and P3' is any C-terminal residue.. In terms of biological role, protease involved in the processing of a variety of prenylated proteins containing the C-terminal CAAX motif, where C is a cysteine modified with an isoprenoid lipid, A is an aliphatic amino acid and X is any C-terminal amino acid. Proteolytically removes the C-terminal three residues of farnesylated and geranylated proteins, leaving the prenylated cysteine as the new C-terminus. This Caenorhabditis elegans protein is CAAX prenyl protease 2.